An 80-amino-acid chain; its full sequence is Probable Rubredoxin-1 (80 aa).

Residues 19–72 (YRKYKCKVCGWVYDPLKGDPSQNIPPKTPFEELPDTWICPVCRGKVGKESFEPL) enclose the Rubredoxin-like domain. Residues cysteine 24, cysteine 27, cysteine 57, and cysteine 60 each coordinate Fe cation.

The protein belongs to the rubredoxin family. Fe(3+) serves as cofactor.

Rubredoxin is a small nonheme, iron protein lacking acid-labile sulfide. Its single Fe, chelated to 4 Cys, functions as an electron acceptor and may also stabilize the conformation of the molecule. This chain is Probable Rubredoxin-1, found in Methanocaldococcus jannaschii (strain ATCC 43067 / DSM 2661 / JAL-1 / JCM 10045 / NBRC 100440) (Methanococcus jannaschii).